Reading from the N-terminus, the 221-residue chain is Early nodulin-like protein 4 (221 aa).

A signal peptide spans Met-1–Phe-21. The 102-residue stretch at His-29–Ser-130 folds into the Phytocyanin domain. Residues Asn-59 and Asn-85 are each glycosylated (N-linked (GlcNAc...) asparagine). Cys-84 and Cys-118 are oxidised to a cystine. A disordered region spans residues Ser-130–Leu-185. Asn-197 is lipidated: GPI-anchor amidated asparagine. A propeptide spans Leu-198 to Val-221 (removed in mature form).

The protein belongs to the early nodulin-like (ENODL) family. In terms of tissue distribution, confined to flowers.

Its subcellular location is the cell membrane. Its function is as follows. May act as a carbohydrate transporter. This Arabidopsis thaliana (Mouse-ear cress) protein is Early nodulin-like protein 4.